Here is a 203-residue protein sequence, read N- to C-terminus: Ribosomal RNA large subunit methyltransferase E (203 aa).

S-adenosyl-L-methionine-binding residues include Gly-60, Trp-62, Asp-79, Asp-95, and Asp-119. Catalysis depends on Lys-159, which acts as the Proton acceptor.

The protein belongs to the class I-like SAM-binding methyltransferase superfamily. RNA methyltransferase RlmE family.

It localises to the cytoplasm. The catalysed reaction is uridine(2552) in 23S rRNA + S-adenosyl-L-methionine = 2'-O-methyluridine(2552) in 23S rRNA + S-adenosyl-L-homocysteine + H(+). Specifically methylates the uridine in position 2552 of 23S rRNA at the 2'-O position of the ribose in the fully assembled 50S ribosomal subunit. This is Ribosomal RNA large subunit methyltransferase E from Pelagibacter ubique (strain HTCC1062).